Consider the following 144-residue polypeptide: Grifin (144 aa).

The Galectin domain maps to 5–133 (FEAFCAGGLA…EHRLAQVELA (129 aa)). Residue Ser138 is modified to Phosphoserine.

Homodimer.

The sequence is that of Grifin (Grifin) from Mus musculus (Mouse).